Consider the following 262-residue polypeptide: uncharacterized protein (262 aa).

One can recognise a BTB domain in the interval 5 to 107; it reads PLISLDVEGV…MIEHKLRTFC (103 aa). Residues 182–195 form the CRIB domain; sequence ISLPRNFTHIAHVG.

This is an uncharacterized protein from Caenorhabditis elegans.